We begin with the raw amino-acid sequence, 308 residues long: V-type immunoglobulin domain-containing suppressor of T-cell activation (308 aa).

Residues 1–32 (MGVPAVPEASSPRWGTLLLAIFLAASRGLVAA) form the signal peptide. The Ig-like V-type domain occupies 33–167 (FKVTTPYSLY…RFYGSMELQV (135 aa)). Over 33-191 (FKVTTPYSLY…EQDSDSITAA (159 aa)) the chain is Extracellular. Asparagine 49, asparagine 91, and asparagine 127 each carry an N-linked (GlcNAc...) asparagine glycan. An intrachain disulfide couples cysteine 54 to cysteine 145. The helical transmembrane segment at 192–212 (ALATGACIVGILCLPLILLLV) threads the bilayer. The Cytoplasmic segment spans residues 213–308 (YKQRQVASHR…VPDSPNSEAI (96 aa)). The segment at 230-308 (MDSNTQGIEN…VPDSPNSEAI (79 aa)) is disordered. Phosphoserine is present on serine 232.

Post-translationally, at the cell surface, may be cleaved by MMP14. N-glycosylated. Expressed in spleen, thymus, bone marrow, lymph node, and in T-cells within the lamina propria of the small intestine. Detected on CD4+ and CD8+ T-cells, bone marrow-derived dendritic cells (BMDCs), peritoneal macrophages, neutrophils, and natural killer (NK) cells. In spleen and lymph nodes, highly expressed on CD4+ T-cell populations, and at lower levels on CD8+ T-cells. In thymus, has low expression on CD4+ cells and CD8+ cells, and not detected on CD4+CD8+ cells. Expressed in splenic and peritoneal CD11b cells. Not detected in most B cells and NK cells (at protein level). Also detected at lower levels in non-hematopoeitic tissues such as heart, brain, lung, kidney, muscle, ovary, and testis.

Its subcellular location is the cell membrane. Immunoregulatory receptor which inhibits the T-cell response. May promote differentiation of embryonic stem cells, by inhibiting BMP4 signaling. May stimulate MMP14-mediated MMP2 activation. The protein is V-type immunoglobulin domain-containing suppressor of T-cell activation of Mus musculus (Mouse).